We begin with the raw amino-acid sequence, 370 residues long: Lysophosphatidic acid receptor 4 (370 aa).

The Extracellular segment spans residues 1 to 43; the sequence is MGDRRFIDFQFQDSNSSLRPRLGNATANNTCIVDDSFKYNLNG. N-linked (GlcNAc...) asparagine glycans are attached at residues N15, N24, and N28. Residues 44–64 traverse the membrane as a helical segment; the sequence is AVYSVVFILGLITNSVSLFVF. At 65 to 73 the chain is on the cytoplasmic side; sequence CFRMKMRSE. The chain crosses the membrane as a helical span at residues 74–94; the sequence is TAIFITNLAVSDLLFVCTLPF. Over 95 to 112 the chain is Extracellular; it reads KIFYNFNRHWPFGDTLCK. The cysteines at positions 111 and 188 are disulfide-linked. Residues 113–133 traverse the membrane as a helical segment; it reads ISGTAFLTNIYGSMLFLTCIS. Residues 134–155 are Cytoplasmic-facing; that stretch reads VDRFLAIVYPFRSRTIRTRRNS. The helical transmembrane segment at 156–176 threads the bilayer; that stretch reads AIVCAGVWILVLSGGISASLF. Topologically, residues 177–203 are extracellular; sequence STTNVNNATTTCFEGFSKRVWKTYLSK. The N-linked (GlcNAc...) asparagine glycan is linked to N183. Residues 204–224 form a helical membrane-spanning segment; that stretch reads ITIFIEVVGFIIPLILNVSCS. Over 225–254 the chain is Cytoplasmic; it reads SVVLRTLRKPATLSQIGTNKKKVLKMITVH. Residues 255–275 form a helical membrane-spanning segment; the sequence is MAVFVVCFVPYNSVLFLYALV. The Extracellular portion of the chain corresponds to 276-294; that stretch reads RSQAITNCFLERFAKIMYP. The helical transmembrane segment at 295 to 315 threads the bilayer; the sequence is ITLCLATLNCCFDPFIYYFTL. Over 316–370 the chain is Cytoplasmic; that stretch reads ESFQKSFYINAHIRMESLFKTETPLTTKPSLPAIQEEVSDQTTNNGGELMLESTF.

The protein belongs to the G-protein coupled receptor 1 family. As to expression, high expression in ovary. Not detected in the brain regions thalamus, putamen, caudate, frontal cortex, pons, hypothalamus and hippocampus.

The protein localises to the cell membrane. In terms of biological role, receptor for lysophosphatidic acid (LPA), a mediator of diverse cellular activities. Transduces a signal by increasing the intracellular calcium ions and by stimulating adenylyl cyclase activity. The rank order of potency for agonists of this receptor is 1-oleoyl- &gt; 1-stearoyl- &gt; 1-palmitoyl- &gt; 1-myristoyl- &gt; 1-alkyl- &gt; 1-alkenyl-LPA. The polypeptide is Lysophosphatidic acid receptor 4 (LPAR4) (Homo sapiens (Human)).